A 386-amino-acid chain; its full sequence is 26S proteasome non-ATPase regulatory subunit 13 homolog B (386 aa).

An N-acetylalanine modification is found at alanine 2. Positions 174–347 (FSEFYKNALL…GTVYVSWAQP (174 aa)) constitute a PCI domain.

Belongs to the proteasome subunit S11 family. In terms of assembly, component of the 19S regulatory particle (RP/PA700) lid subcomplex of the 26S proteasome. The 26S proteasome is composed of a core protease (CP), known as the 20S proteasome, capped at one or both ends by the 19S regulatory particle (RP/PA700). The RP/PA700 complex is composed of at least 17 different subunits in two subcomplexes, the base and the lid, which form the portions proximal and distal to the 20S proteolytic core, respectively. As to expression, ubiquitous with highest expression in flowers.

In terms of biological role, acts as a regulatory subunit of the 26S proteasome which is involved in the ATP-dependent degradation of ubiquitinated proteins. The chain is 26S proteasome non-ATPase regulatory subunit 13 homolog B (RPN9B) from Arabidopsis thaliana (Mouse-ear cress).